A 450-amino-acid chain; its full sequence is MAAPPLGRLVLTHLLVALFGMGSWAAVNGIWVELPVVVKELPEGWSLPSYLSVLVALGNLGLLLVTLWRRLARGKGEQVPIRVVQGLGIVGTGLLASLWNHVAPVAGKPYSVAFLTLAFVLALACCASNVTFLPFLSHLPPPFLRSFFLGQGLSALLPCVLALGQGVGRLECLHVPANRTTGPPIEVSPINFPERFSATTFFWVLTALLGTSAAAFQGLLLLLPSPTSEPTTGTGLRVETPGTEEEEEEEEASPLQEPPGQVAGIVSSPDPKAHQLFSSRSACLLGLLAITNALTNGVLPAVQSFSCLPYGRLAYHLAVVLGSCANPLACFLAMAVLCRSLAGLCGLSLLGMLLGSYLMTLAALSPCPPLVGTSAGVVLVVLSWVLCAGTFSYIKVAISSMLHSGGRPALLAAGVAIQVGSLLGAVAMFPPTSIYRVFRSGKDCVDQCGL.

Transmembrane regions (helical) follow at residues 14–34, 47–67, 86–106, 112–132, and 147–167; these read LLVA…WVEL, LPSY…LVTL, GLGI…APVA, VAFL…NVTF, and FFLG…GQGV. N178 carries an N-linked (GlcNAc...) asparagine glycan. The chain crosses the membrane as a helical span at residues 201–221; it reads FFWVLTALLGTSAAAFQGLLL. A compositionally biased stretch (low complexity) spans 227–236; that stretch reads TSEPTTGTGL. Residues 227–264 form a disordered region; sequence TSEPTTGTGLRVETPGTEEEEEEEEASPLQEPPGQVAG. The span at 242-252 shows a compositional bias: acidic residues; sequence GTEEEEEEEEA. 5 consecutive transmembrane segments (helical) span residues 282-302, 317-337, 344-364, 369-389, and 409-429; these read ACLL…LPAV, LAVV…MAVL, LCGL…LAAL, PLVG…LCAG, and ALLA…VAMF.

This sequence belongs to the riboflavin transporter family.

It is found in the cell membrane. It carries out the reaction riboflavin(in) = riboflavin(out). Its activity is regulated as follows. Riboflavin transport is Na(+)-independent but moderately pH-sensitive. Activity is strongly inhibited by riboflavin analogs, such as lumiflavin. Weakly inhibited by flavin adenine dinucleotide (FAD) and flavin mononucleotide (FMN). Functionally, plasma membrane transporter mediating the uptake by cells of the water soluble vitamin B2/riboflavin that plays a key role in biochemical oxidation-reduction reactions of the carbohydrate, lipid, and amino acid metabolism. May also act as a receptor for 4-hydroxybutyrate. In Mus musculus (Mouse), this protein is Solute carrier family 52, riboflavin transporter, member 2 (Slc52a2).